The sequence spans 334 residues: Protein-methionine-sulfoxide reductase catalytic subunit MsrP (334 aa).

A signal peptide (tat-type signal) is located at residues 1–44 (MKKNQFLKESDVTAESVFFMKRRQVLKALGISAAALSLPHAAHA). Residues Asn88, 91–92 (YE), Cys146, Thr181, Asn233, Arg238, and 249–251 (GIK) each bind Mo-molybdopterin.

The protein belongs to the MsrP family. As to quaternary structure, heterodimer of a catalytic subunit (MsrP) and a heme-binding subunit (MsrQ). The cofactor is Mo-molybdopterin. Post-translationally, predicted to be exported by the Tat system. The position of the signal peptide cleavage has not been experimentally proven.

The protein resides in the periplasm. It carries out the reaction L-methionyl-[protein] + a quinone + H2O = L-methionyl-(S)-S-oxide-[protein] + a quinol. The catalysed reaction is L-methionyl-[protein] + a quinone + H2O = L-methionyl-(R)-S-oxide-[protein] + a quinol. In terms of biological role, part of the MsrPQ system that repairs oxidized periplasmic proteins containing methionine sulfoxide residues (Met-O), using respiratory chain electrons. Thus protects these proteins from oxidative-stress damage caused by reactive species of oxygen and chlorine generated by the host defense mechanisms. MsrPQ is essential for the maintenance of envelope integrity under bleach stress, rescuing a wide series of structurally unrelated periplasmic proteins from methionine oxidation, including the primary periplasmic chaperone SurA and the lipoprotein Pal. The catalytic subunit MsrP is non-stereospecific, being able to reduce both (R-) and (S-) diastereoisomers of methionine sulfoxide. The polypeptide is Protein-methionine-sulfoxide reductase catalytic subunit MsrP (Shigella sonnei (strain Ss046)).